Reading from the N-terminus, the 669-residue chain is Glutaminase kidney isoform, mitochondrial (669 aa).

Residues Met1–Leu54 constitute a mitochondrion transit peptide. The tract at residues Leu68–Ser118 is disordered. A compositionally biased stretch (pro residues) spans Gly93–Pro103. An N6-succinyllysine mark is found at Lys130 and Lys164. Substrate is bound at residue Ser286. Lys311 carries the N6-acetyllysine modification. The tract at residues Gly315–Phe322 is highly mobile activation loop. Positions 335, 381, 388, 414, 466, and 484 each coordinate substrate. 2 ANK repeats span residues Asp585–Phe614 and Trp619–Pro648. The disordered stretch occupies residues Thr647–Leu669. A Phosphoserine modification is found at Ser652. A compositionally biased stretch (basic and acidic residues) spans Asp653–Leu669.

The protein belongs to the glutaminase family. As to quaternary structure, homotetramer, dimer of dimers. The tetramers can assemble into rod-like oligomers (in vitro), but the physiological significance of this is not clear. Interacts with RAF1 and MAP2K2. Interacts with ATCAY; the interaction is direct and may control GLS localization, negatively regulating its activity. In terms of processing, synthesized as a 74-kDa cytosolic precursor which is proteolytically processed by the mitochondrial-processing peptidase (MPP) via a 72-kDa intermediate to yield the mature mitochondrial 68- and 65-kDa subunits. Isoform 1 and isoform 3 are detected in brain cortex. Isoform 3 is highly expressed in astrocytoma, ganglioglioma and ependymoma. Isoform 1 is highly expressed in brain and kidney, but not detected in liver. Isoform 3 is highly expressed in heart and pancreas, detected at lower levels in placenta, lung, pancreas and kidney, but is not detected in liver. Isoform 2 is expressed in cardiac and skeletal muscle.

The protein localises to the mitochondrion. The protein resides in the cytoplasm. It localises to the cytosol. Its subcellular location is the mitochondrion matrix. The catalysed reaction is L-glutamine + H2O = L-glutamate + NH4(+). Isoform 1 and isoform 3 are activated by phosphate. Inhibited by BPTES. BPTES binds between subunits and favors dissociation of the tetramer into dimers. Inhibited by 6-diazo-5-oxo-L-norleucine (DON). Enzyme activity is stimulated by phosphorylation. Catalyzes the first reaction in the primary pathway for the renal catabolism of glutamine. Plays a role in maintaining acid-base homeostasis. Regulates the levels of the neurotransmitter glutamate, the main excitatory neurotransmitter in the brain. Its function is as follows. Lacks catalytic activity. The protein is Glutaminase kidney isoform, mitochondrial (GLS) of Homo sapiens (Human).